Here is a 333-residue protein sequence, read N- to C-terminus: Galactinol synthase 5 (333 aa).

The active site involves Lys103. Mn(2+) contacts are provided by Asp119, Asp121, and His257.

The protein belongs to the glycosyltransferase 8 family. Galactosyltransferase subfamily. A divalent metal cation serves as cofactor.

Its subcellular location is the cytoplasm. It carries out the reaction myo-inositol + UDP-alpha-D-galactose = alpha-D-galactosyl-(1-&gt;3)-1D-myo-inositol + UDP + H(+). Functionally, galactinol synthase involved in the biosynthesis of raffinose family oligosaccharides (RFOs) that function as osmoprotectants. May promote plant stress tolerance. This chain is Galactinol synthase 5 (GOLS5), found in Arabidopsis thaliana (Mouse-ear cress).